Consider the following 525-residue polypeptide: Phosphoenolpyruvate carboxykinase (ATP) (525 aa).

Substrate contacts are provided by Arg-52, Tyr-186, and Lys-192. ATP-binding positions include Lys-192, His-211, and 228–236; that span reads GLSGTGKTT. Mn(2+) is bound by residues Lys-192 and His-211. Mn(2+) is bound at residue Asp-249. Residues Glu-277, Arg-314, 433–434, and Thr-439 contribute to the ATP site; that span reads RI. Arg-314 lines the substrate pocket.

Belongs to the phosphoenolpyruvate carboxykinase (ATP) family. Mn(2+) is required as a cofactor.

The protein resides in the cytoplasm. It carries out the reaction oxaloacetate + ATP = phosphoenolpyruvate + ADP + CO2. It participates in carbohydrate biosynthesis; gluconeogenesis. In terms of biological role, involved in the gluconeogenesis. Catalyzes the conversion of oxaloacetate (OAA) to phosphoenolpyruvate (PEP) through direct phosphoryl transfer between the nucleoside triphosphate and OAA. This is Phosphoenolpyruvate carboxykinase (ATP) from Fusobacterium nucleatum subsp. nucleatum (strain ATCC 25586 / DSM 15643 / BCRC 10681 / CIP 101130 / JCM 8532 / KCTC 2640 / LMG 13131 / VPI 4355).